Here is a 717-residue protein sequence, read N- to C-terminus: Cleavage stimulation factor subunit 3 (717 aa).

An N-acetylserine modification is found at serine 2. HAT repeat units lie at residues 45–77 (QPID…AEIK), 79–110 (KNYD…YVRE), 117–152 (SYKE…FLKG), 163–196 (QRIT…YEEG), 221–261 (KEYE…WEKS), 271–303 (LITK…YLEQ), 319–352 (LFSD…YEES), 354–387 (MKYE…FARR), and 458–494 (NEDN…FESN). Residues 684–705 (VKRPNEDSDEDEEKGAVVPPVH) form a disordered region. The residue at position 691 (serine 691) is a Phosphoserine.

In terms of assembly, homodimer. The CSTF complex is composed of CSTF1 (50 kDa subunit), CSTF2 (64 kDa subunit) and CSTF3 (77 kDa subunit). CSTF3 directly interacts with CSTF1 and CSTF2. Interacts with FIP1L1.

It is found in the nucleus. Functionally, one of the multiple factors required for polyadenylation and 3'-end cleavage of mammalian pre-mRNAs. This is Cleavage stimulation factor subunit 3 (CSTF3) from Homo sapiens (Human).